A 325-amino-acid chain; its full sequence is Olfactory receptor 1S1 (325 aa).

The Extracellular segment spans residues 1–38 (MKTFSSFLQIGRNMHQGNQTTITEFILLGFFKQDEHQN). The N-linked (GlcNAc...) asparagine glycan is linked to Asn18. The helical transmembrane segment at 39 to 62 (LLFVLFLGMYLVTVIGNGLIIVAI) threads the bilayer. The Cytoplasmic segment spans residues 63 to 70 (SLDTYLHT). The helical transmembrane segment at 71-92 (PMYLFLANLSFADISSISNSVP) threads the bilayer. The Extracellular portion of the chain corresponds to 93–113 (KMLVNIQTKSQSISYESCITQ). Cys110 and Cys202 are joined by a disulfide. Residues 114 to 133 (MYFSIVFVVIDNLLLGTMAY) traverse the membrane as a helical segment. Residues 134–152 (DHFVAICHPLNYTILMRPR) are Cytoplasmic-facing. The helical transmembrane segment at 153 to 171 (FGILLTVISWFLSNIIALT) threads the bilayer. The Extracellular portion of the chain corresponds to 172-208 (HTLLLIQLLFCNHNTLPHFFCDLAPLLKLSCSDTLIN). A helical transmembrane segment spans residues 209 to 232 (ELVLFIVGLSVIIFPFTLSFFSYV). The Cytoplasmic segment spans residues 233 to 249 (CIIRAVLRVSSTQGKWK). The chain crosses the membrane as a helical span at residues 250-272 (AFSTCGSHLTVVLLFYGTIVGVY). The Extracellular portion of the chain corresponds to 273-285 (FFPSSTHPEDTDK). The helical transmembrane segment at 286 to 305 (IGAVLFTVVTPMINPFIYSL) threads the bilayer. Residues 306 to 325 (RNKDMKGALRKLINRKISSL) lie on the Cytoplasmic side of the membrane.

It belongs to the G-protein coupled receptor 1 family.

Its subcellular location is the cell membrane. In terms of biological role, odorant receptor. This chain is Olfactory receptor 1S1 (OR1S1), found in Homo sapiens (Human).